The chain runs to 409 residues: Serine/threonine transporter SstT (409 aa).

Transmembrane regions (helical) follow at residues Leu24–Phe44, Phe48–Ile68, Ile82–Met102, Ala142–Leu162, Leu194–Gly214, Leu218–Val238, Ile292–Met312, and Gly319–Cys339.

Belongs to the dicarboxylate/amino acid:cation symporter (DAACS) (TC 2.A.23) family.

It is found in the cell inner membrane. The catalysed reaction is L-serine(in) + Na(+)(in) = L-serine(out) + Na(+)(out). It catalyses the reaction L-threonine(in) + Na(+)(in) = L-threonine(out) + Na(+)(out). Its function is as follows. Involved in the import of serine and threonine into the cell, with the concomitant import of sodium (symport system). This chain is Serine/threonine transporter SstT, found in Neisseria meningitidis serogroup B (strain ATCC BAA-335 / MC58).